A 468-amino-acid polypeptide reads, in one-letter code: Siroheme synthase (468 aa).

Residues 1–203 (MQYLPIFLNI…GQEEEAEGAL (203 aa)) form a precorrin-2 dehydrogenase /sirohydrochlorin ferrochelatase region. NAD(+) is bound by residues 22–23 (TV) and 43–44 (PK). The residue at position 128 (serine 128) is a Phosphoserine. The interval 216–468 (GEVYLVGAGP…VPDREPLDAR (253 aa)) is uroporphyrinogen-III C-methyltransferase. Proline 225 contributes to the S-adenosyl-L-methionine binding site. The active-site Proton acceptor is the aspartate 248. The Proton donor role is filled by lysine 270. S-adenosyl-L-methionine is bound by residues 301–303 (GGD), isoleucine 306, 331–332 (TA), methionine 383, and glycine 412.

It in the N-terminal section; belongs to the precorrin-2 dehydrogenase / sirohydrochlorin ferrochelatase family. In the C-terminal section; belongs to the precorrin methyltransferase family.

It catalyses the reaction uroporphyrinogen III + 2 S-adenosyl-L-methionine = precorrin-2 + 2 S-adenosyl-L-homocysteine + H(+). The enzyme catalyses precorrin-2 + NAD(+) = sirohydrochlorin + NADH + 2 H(+). The catalysed reaction is siroheme + 2 H(+) = sirohydrochlorin + Fe(2+). It functions in the pathway cofactor biosynthesis; adenosylcobalamin biosynthesis; precorrin-2 from uroporphyrinogen III: step 1/1. The protein operates within cofactor biosynthesis; adenosylcobalamin biosynthesis; sirohydrochlorin from precorrin-2: step 1/1. It participates in porphyrin-containing compound metabolism; siroheme biosynthesis; precorrin-2 from uroporphyrinogen III: step 1/1. Its pathway is porphyrin-containing compound metabolism; siroheme biosynthesis; siroheme from sirohydrochlorin: step 1/1. It functions in the pathway porphyrin-containing compound metabolism; siroheme biosynthesis; sirohydrochlorin from precorrin-2: step 1/1. Multifunctional enzyme that catalyzes the SAM-dependent methylations of uroporphyrinogen III at position C-2 and C-7 to form precorrin-2 via precorrin-1. Then it catalyzes the NAD-dependent ring dehydrogenation of precorrin-2 to yield sirohydrochlorin. Finally, it catalyzes the ferrochelation of sirohydrochlorin to yield siroheme. The sequence is that of Siroheme synthase from Nitrosococcus oceani (strain ATCC 19707 / BCRC 17464 / JCM 30415 / NCIMB 11848 / C-107).